Reading from the N-terminus, the 100-residue chain is MPRPKKPRTIGCMPKASCFKPNGIPAHNLPCIALEADELEALRLADVLQLHQLEAAQSMGVSRQTFGNIIKRARNKVALCLVEGKVLTLPNQSQDKEKEA.

It belongs to the UPF0251 family.

The polypeptide is UPF0251 protein VVA1436 (Vibrio vulnificus (strain YJ016)).